A 92-amino-acid chain; its full sequence is PqqA binding protein (92 aa).

The protein belongs to the PqqD family. As to quaternary structure, monomer. Interacts with PqqE.

The protein operates within cofactor biosynthesis; pyrroloquinoline quinone biosynthesis. In terms of biological role, functions as a PqqA binding protein and presents PqqA to PqqE, in the pyrroloquinoline quinone (PQQ) biosynthetic pathway. The polypeptide is PqqA binding protein (Xanthomonas oryzae pv. oryzae (strain PXO99A)).